Consider the following 126-residue polypeptide: Histone H2B type 1-C/E/G (126 aa).

The segment covering 1 to 12 has biased composition (low complexity); it reads MPEPAKSAPAPK. Positions 1–36 are disordered; sequence MPEPAKSAPAPKKGSKKAVTKAQKKDGKKRKRSRKE. At P2 the chain carries N-acetylproline. E3 is modified (ADP-ribosyl glutamic acid). Position 6 is an N6-(2-hydroxyisobutyryl)lysine; alternate (K6). K6 carries the post-translational modification N6-(beta-hydroxybutyryl)lysine; alternate. K6 is subject to N6-acetyllysine; alternate. N6-butyryllysine; alternate is present on K6. K6 carries the post-translational modification N6-crotonyllysine; alternate. K6 carries the N6-lactoyllysine; alternate modification. K6 is covalently cross-linked (Glycyl lysine isopeptide (Lys-Gly) (interchain with G-Cter in SUMO2); alternate). An ADP-ribosylserine modification is found at S7. At K12 the chain carries N6-(beta-hydroxybutyryl)lysine; alternate. 2 positions are modified to N6-acetyllysine; alternate: K12 and K13. K12 and K13 each carry N6-crotonyllysine; alternate. At K12 the chain carries N6-lactoyllysine; alternate. K13 is modified (N6-(2-hydroxyisobutyryl)lysine; alternate). Position 15 is a phosphoserine; by STK4/MST1 (S15). An N6-acetyllysine; alternate mark is found at K16, K17, K21, and K24. Residues K16, K17, K21, and K24 each carry the N6-crotonyllysine; alternate modification. An N6-lactoyllysine; alternate mark is found at K16, K17, K21, and K24. The residue at position 17 (K17) is an N6-glutaryllysine; alternate. N6-(2-hydroxyisobutyryl)lysine; alternate occurs at positions 21 and 24. At K21 the chain carries N6-(beta-hydroxybutyryl)lysine; alternate. An N6-butyryllysine; alternate modification is found at K21. K21 participates in a covalent cross-link: Glycyl lysine isopeptide (Lys-Gly) (interchain with G-Cter in SUMO2); alternate. The residue at position 25 (K25) is an N6-(2-hydroxyisobutyryl)lysine. K35 bears the N6-(2-hydroxyisobutyryl)lysine; alternate mark. K35 carries the post-translational modification N6-(beta-hydroxybutyryl)lysine; alternate. K35 carries the post-translational modification N6-crotonyllysine; alternate. K35 is subject to N6-glutaryllysine; alternate. N6-succinyllysine; alternate is present on K35. A Glycyl lysine isopeptide (Lys-Gly) (interchain with G-Cter in ubiquitin); alternate cross-link involves residue K35. The residue at position 36 (E36) is a PolyADP-ribosyl glutamic acid. S37 bears the Phosphoserine; by AMPK mark. 3 positions are modified to N6-(2-hydroxyisobutyryl)lysine; alternate: K44, K47, and K58. The residue at position 44 (K44) is an N6-lactoyllysine; alternate. N6-glutaryllysine; alternate occurs at positions 44 and 47. K47 carries the N6-methyllysine; alternate modification. K58 bears the N6,N6-dimethyllysine; alternate mark. Residue R80 is modified to Dimethylated arginine. N6-(2-hydroxyisobutyryl)lysine; alternate is present on K86. N6-acetyllysine; alternate is present on K86. An N6-lactoyllysine; alternate modification is found at K86. An N6,N6,N6-trimethyllysine; alternate modification is found at K86. 2 positions are modified to omega-N-methylarginine: R87 and R93. K109 carries the post-translational modification N6-(2-hydroxyisobutyryl)lysine; alternate. K109 carries the N6-(beta-hydroxybutyryl)lysine; alternate modification. K109 bears the N6-lactoyllysine; alternate mark. N6-glutaryllysine; alternate is present on K109. At K109 the chain carries N6-methyllysine; alternate. S113 carries an O-linked (GlcNAc) serine glycan. T116 carries the post-translational modification Phosphothreonine. N6-(2-hydroxyisobutyryl)lysine; alternate occurs at positions 117 and 121. At K117 the chain carries N6-(beta-hydroxybutyryl)lysine; alternate. An N6-lactoyllysine; alternate mark is found at K117 and K121. An N6-glutaryllysine; alternate mark is found at K117 and K121. 2 positions are modified to N6-succinyllysine; alternate: K117 and K121. The residue at position 117 (K117) is an N6-methylated lysine; alternate. K121 is covalently cross-linked (Glycyl lysine isopeptide (Lys-Gly) (interchain with G-Cter in ubiquitin); alternate).

The protein belongs to the histone H2B family. In terms of assembly, the nucleosome is a histone octamer containing two molecules each of H2A, H2B, H3 and H4 assembled in one H3-H4 heterotetramer and two H2A-H2B heterodimers. The octamer wraps approximately 147 bp of DNA. Interacts with VRK1; the interaction is mediated by the nucleosome acidic patch, a cluster of negatively charged residues of H2A and H2B forming a cleft within the nucleosome core. Monoubiquitination at Lys-35 (H2BK34Ub) by the MSL1/MSL2 dimer is required for histone H3 'Lys-4' (H3K4me) and 'Lys-79' (H3K79me) methylation and transcription activation at specific gene loci, such as HOXA9 and MEIS1 loci. Similarly, monoubiquitination at Lys-121 (H2BK120Ub) by the RNF20/40 complex gives a specific tag for epigenetic transcriptional activation and is also prerequisite for histone H3 'Lys-4' and 'Lys-79' methylation. It also functions cooperatively with the FACT dimer to stimulate elongation by RNA polymerase II. H2BK120Ub also acts as a regulator of mRNA splicing: deubiquitination by USP49 is required for efficient cotranscriptional splicing of a large set of exons. In terms of processing, phosphorylated on Ser-15 (H2BS14ph) by STK4/MST1 during apoptosis; which facilitates apoptotic chromatin condensation. Also phosphorylated on Ser-15 in response to DNA double strand breaks (DSBs), and in correlation with somatic hypermutation and immunoglobulin class-switch recombination. Phosphorylation at Ser-37 (H2BS36ph) by AMPK in response to stress promotes transcription. Post-translationally, glcNAcylation at Ser-113 promotes monoubiquitination of Lys-121. It fluctuates in response to extracellular glucose, and associates with transcribed genes. ADP-ribosylated by PARP1 or PARP2 on Ser-7 (H2BS6ADPr) in response to DNA damage. H2BS6ADPr promotes recruitment of CHD1L. Mono-ADP-ribosylated on Glu-3 (H2BE2ADPr) by PARP3 in response to single-strand breaks. Poly ADP-ribosylation on Glu-36 (H2BE35ADPr) by PARP1 regulates adipogenesis: it inhibits phosphorylation at Ser-37 (H2BS36ph), thereby blocking expression of pro-adipogenetic genes. In terms of processing, crotonylation (Kcr) is specifically present in male germ cells and marks testis-specific genes in post-meiotic cells, including X-linked genes that escape sex chromosome inactivation in haploid cells. Crotonylation marks active promoters and enhancers and confers resistance to transcriptional repressors. It is also associated with post-meiotically activated genes on autosomes. Post-translationally, hydroxybutyrylation of histones is induced by starvation. Lactylated in macrophages by EP300/P300 by using lactoyl-CoA directly derived from endogenous or exogenous lactate, leading to stimulates gene transcription.

It localises to the nucleus. The protein localises to the chromosome. In terms of biological role, core component of nucleosome. Nucleosomes wrap and compact DNA into chromatin, limiting DNA accessibility to the cellular machineries which require DNA as a template. Histones thereby play a central role in transcription regulation, DNA repair, DNA replication and chromosomal stability. DNA accessibility is regulated via a complex set of post-translational modifications of histones, also called histone code, and nucleosome remodeling. This Mus musculus (Mouse) protein is Histone H2B type 1-C/E/G.